The chain runs to 336 residues: Malate dehydrogenase, cytoplasmic (336 aa).

NAD(+)-binding positions include 11–17 (GAAGQIG) and D42. Positions 92 and 98 each coordinate substrate. Residues N105, Q112, and 129 to 131 (VGN) contribute to the NAD(+) site. Substrate contacts are provided by N131 and R163. The active-site Proton acceptor is H188.

Belongs to the LDH/MDH superfamily. MDH type 2 family. As to quaternary structure, homodimer.

The protein localises to the cytoplasm. It catalyses the reaction (S)-malate + NAD(+) = oxaloacetate + NADH + H(+). Catalyzes the reversible conversion of (S)-malate to oxaloacetate in the cytoplasm where oxaloacetate is used for gluconeogenesis. The protein is Malate dehydrogenase, cytoplasmic of Caenorhabditis elegans.